A 354-amino-acid chain; its full sequence is Hyaluronan and proteoglycan link protein 1 (354 aa).

A propeptide spanning residues Met1–Leu9 is cleaved from the precursor. Residues Asn21 and Asn56 are each glycosylated (N-linked (GlcNAc...) asparagine). An Ig-like V-type domain is found at Pro38–Val152. Disulfide bonds link Cys61–Cys139, Cys181–Cys252, Cys205–Cys226, Cys279–Cys349, and Cys304–Cys325. 2 consecutive Link domains span residues Val159 to Thr254 and Gly259 to Arg351.

It belongs to the HAPLN family.

It localises to the secreted. It is found in the extracellular space. Its subcellular location is the extracellular matrix. Functionally, stabilizes the aggregates of proteoglycan monomers with hyaluronic acid in the extracellular cartilage matrix. The sequence is that of Hyaluronan and proteoglycan link protein 1 (HAPLN1) from Sus scrofa (Pig).